Consider the following 1183-residue polypeptide: RecQ-like DNA helicase BLM (1183 aa).

Positions 1-109 are disordered; that stretch reads MEEARAATNG…AAEQDSSAEH (109 aa). The segment covering 14-27 has biased composition (polar residues); it reads ESQKLSNGEKSSQL. Residues 38-48 show a composition bias toward acidic residues; that stretch reads ADIELEEDDYL. A necessary for dimerization and homooligomerization region spans residues 110-162; it reads ADKGLHLEQQLYSVMEDICKLVDAIPLHELTSISCAKELLQQRELRRKLLADS. Disordered regions lie at residues 164 to 215, 260 to 323, and 381 to 408; these read ALNT…LPSV, PKVN…GCWD, and GSAP…PLVH. Composition is skewed to polar residues over residues 206 to 215 and 265 to 280; these read TPKSTNLPSV and KGST…SFNG. ATP is bound by residues 439–443 and 463–467; these read FRTNQ and GGGKS. A Helicase ATP-binding domain is found at 447 to 622; sequence INAALLGEDC…QNQLEMLKPQ (176 aa). Residues 566-569 carry the DEAH box motif; the sequence is DEAH. 3' overhang DNA-binding regions lie at residues 641–644 and 668–670; these read KPKK and SRH. The Helicase C-terminal domain occupies 648–795; that stretch reads DCLEWIKKYH…TRQTHFNNLY (148 aa). Arg753 contacts ATP. The tract at residues 771–774 is 3' overhang DNA-binding; sequence RLRR. Zn(2+) is bound by residues Cys807, Cys826, Cys834, and Cys837. Residues 865-910 are DNA Holliday junction binding; that stretch reads QVGGINGNRNTGSGRYTLNMMVDIFLGAKSAKIQSGIFGKGAAYSR. 3 3' overhang DNA-binding regions span residues 881–883, 892–896, and 931–937; these read TLN, AKSAK, and YITANDQ. Residues 983-1063 enclose the HRDC domain; that stretch reads EEMVKKCLGE…DKYSEWTTPE (81 aa). The necessary for ssDNA and DNA Holliday junction binding stretch occupies residues 998–1015; sequence KTLGKIFDVHYFNIFSTS. The tract at residues 1068-1183 is disordered; that stretch reads QSVDTAPGSA…HFLQPSYAVL (116 aa). A compositionally biased stretch (polar residues) spans 1091-1101; it reads VTSSYFGGNAN. Residues 1104–1120 carry the Nuclear localization signal motif; that stretch reads RKRKRLPNSGESKRKKT. Over residues 1133–1142 the composition is skewed to basic residues; it reads ARYRRARRAP. Over residues 1143-1158 the composition is skewed to low complexity; the sequence is GSRAAAPAQSSALRGA.

It belongs to the helicase family. RecQ subfamily. In terms of assembly, monomer. Homodimer (via N-terminus). Homotetramer (via N-terminus); dimer of dimers. Homohexamer (via N-terminus). Self-association negatively regulates DNA unwinding amplitude and rate. Oligomer complexes dissociate into monomer in presence of ATP. Requires Zn(2+) as cofactor.

The protein resides in the nucleus. It carries out the reaction Couples ATP hydrolysis with the unwinding of duplex DNA by translocating in the 3'-5' direction.. It catalyses the reaction ATP + H2O = ADP + phosphate + H(+). In terms of biological role, ATP-dependent DNA helicase that unwinds single- and double-stranded DNA in a 3'-5' direction. Participates in DNA replication and repair. Involved in 5'-end resection of DNA during double-strand break (DSB) repair. Negatively regulates sister chromatid exchange (SCE). Stimulates DNA 4-way junction branch migration and DNA Holliday junction dissolution. Binds DNA. Binds single-stranded DNA (ssDNA), forked duplex DNA and DNA Holliday junction. This Gallus gallus (Chicken) protein is RecQ-like DNA helicase BLM (BLM).